A 503-amino-acid chain; its full sequence is Maturase K (503 aa).

It belongs to the intron maturase 2 family. MatK subfamily.

The protein resides in the plastid. The protein localises to the chloroplast. Functionally, usually encoded in the trnK tRNA gene intron. Probably assists in splicing its own and other chloroplast group II introns. The chain is Maturase K from Eucalyptus globulus (Tasmanian blue gum).